The primary structure comprises 546 residues: CTP synthase (546 aa).

Residues 1–266 (MTTRYIFVTG…DQLVTKRFGI (266 aa)) form an amidoligase domain region. Residue Ser-14 participates in CTP binding. Ser-14 is a UTP binding site. Residues 15–20 (SLGKGI) and Asp-72 each bind ATP. Mg(2+) is bound by residues Asp-72 and Glu-140. Residues 147–149 (DIE), 187–192 (KTKPTQ), and Lys-223 contribute to the CTP site. Residues 187-192 (KTKPTQ) and Lys-223 each bind UTP. 239–241 (KDV) contacts ATP. Residues 291–542 (TIGMVGKYIE…VAAAAAYQKR (252 aa)) enclose the Glutamine amidotransferase type-1 domain. Gly-352 contributes to the L-glutamine binding site. Catalysis depends on Cys-379, which acts as the Nucleophile; for glutamine hydrolysis. L-glutamine contacts are provided by residues 380-383 (LGMQ), Glu-403, and Arg-470. Active-site residues include His-515 and Glu-517.

The protein belongs to the CTP synthase family. Homotetramer.

The enzyme catalyses UTP + L-glutamine + ATP + H2O = CTP + L-glutamate + ADP + phosphate + 2 H(+). It catalyses the reaction L-glutamine + H2O = L-glutamate + NH4(+). It carries out the reaction UTP + NH4(+) + ATP = CTP + ADP + phosphate + 2 H(+). It functions in the pathway pyrimidine metabolism; CTP biosynthesis via de novo pathway; CTP from UDP: step 2/2. Its activity is regulated as follows. Allosterically activated by GTP, when glutamine is the substrate; GTP has no effect on the reaction when ammonia is the substrate. The allosteric effector GTP functions by stabilizing the protein conformation that binds the tetrahedral intermediate(s) formed during glutamine hydrolysis. Inhibited by the product CTP, via allosteric rather than competitive inhibition. Its function is as follows. Catalyzes the ATP-dependent amination of UTP to CTP with either L-glutamine or ammonia as the source of nitrogen. Regulates intracellular CTP levels through interactions with the four ribonucleotide triphosphates. The protein is CTP synthase of Shewanella pealeana (strain ATCC 700345 / ANG-SQ1).